The sequence spans 599 residues: rRNA (cytosine-C(5))-methyltransferase NOP2C (599 aa).

The 108-residue stretch at 158–265 folds into the PUA domain; sequence PKEVLVSRKC…IAVDLNHRVF (108 aa). Residues 304–310, Asp-328, and Asp-355 contribute to the S-adenosyl-L-methionine site; that span reads CAAPGGK. Residues 372–454 are disordered; it reads LINGDNSSSM…GGRAGKSQGF (83 aa). Residues 378 to 388 are compositionally biased toward low complexity; the sequence is SSSMTSHSELS. Over residues 399–412 the composition is skewed to basic and acidic residues; it reads RRSEADKSCEKNDS. Polar residues predominate over residues 413-424; it reads TEQPNGGDNVSQ. Basic residues predominate over residues 428 to 438; that stretch reads RKNKGRLKNGR. Asp-465 contacts S-adenosyl-L-methionine. Cys-516 functions as the Nucleophile in the catalytic mechanism.

It belongs to the class I-like SAM-binding methyltransferase superfamily. RsmB/NOP family.

The protein resides in the nucleus. The protein localises to the nucleolus. It carries out the reaction a cytidine in rRNA + S-adenosyl-L-methionine = a 5-methylcytidine in rRNA + S-adenosyl-L-homocysteine + H(+). Functionally, involved in ribosomal large subunit assembly. S-adenosyl-L-methionine-dependent methyltransferase that may methylates the C(5) position of cytosine in rRNA. May play a role in the regulation of the cell cycle and the increased nucleolar activity that is associated with the cell proliferation. Seems involved in the regulation of cell proliferation. In Arabidopsis thaliana (Mouse-ear cress), this protein is rRNA (cytosine-C(5))-methyltransferase NOP2C.